Here is an 84-residue protein sequence, read N- to C-terminus: U21-theraphotoxin-Cg1c (84 aa).

An N-terminal signal peptide occupies residues 1–21 (MKVSVLITLAVLGVMFLLTSA). Residues 22 to 47 (EERGSDQMDSPAWLKSMERIFQSEER) constitute a propeptide that is removed on maturation. 3 cysteine pairs are disulfide-bonded: C49-C63, C56-C68, and C62-C76.

The protein belongs to the neurotoxin 10 (Hwtx-1) family. 05 (F4a) subfamily. As to expression, expressed by the venom gland.

It localises to the secreted. Its function is as follows. Probable ion channel inhibitor. The sequence is that of U21-theraphotoxin-Cg1c from Chilobrachys guangxiensis (Chinese earth tiger tarantula).